The following is a 105-amino-acid chain: Large ribosomal subunit protein eL33 (105 aa).

Belongs to the eukaryotic ribosomal protein eL33 family.

In terms of biological role, the protein was found to bind to both initiator and elongator tRNAs and consequently was assigned to the P site or P and A site. This chain is Large ribosomal subunit protein eL33 (rpl35a), found in Dictyostelium discoideum (Social amoeba).